Consider the following 542-residue polypeptide: Coiled-coil domain-containing protein 60 (542 aa).

Residues 70–97 adopt a coiled-coil conformation; the sequence is TMLQEETAFKKHQQHLKKLQEEELNKFQ. Disordered stretches follow at residues 228 to 284 and 334 to 358; these read ATRK…EEEV and QTTH…TQKK. Composition is skewed to low complexity over residues 245–261 and 342–351; these read SGGS…NPSS and RSSTTSGESH.

The protein is Coiled-coil domain-containing protein 60 (Ccdc60) of Rattus norvegicus (Rat).